A 610-amino-acid polypeptide reads, in one-letter code: Phragmoplastin DRP1A (610 aa).

Met-1 is modified (N-acetylmethionine). The 270-residue stretch at 31 to 300 (WDSLPAIAVV…LERVIKSRIP (270 aa)) folds into the Dynamin-type G domain. The interval 41-48 (GGQSSGKS) is G1 motif. Position 44–49 (44–49 (SSGKSS)) interacts with GTP. The G2 motif stretch occupies residues 67 to 69 (VTR). The G3 motif stretch occupies residues 142–145 (DLPG). A G4 motif region spans residues 211–214 (TKID). GTP is bound by residues 212–217 (KIDLMD) and 242–245 (NRSQ). The interval 241-244 (VNRS) is G5 motif. A GED domain is found at 518–610 (LRRIGSNVLS…SEIDAVAWSK (93 aa)).

The protein belongs to the TRAFAC class dynamin-like GTPase superfamily. Dynamin/Fzo/YdjA family. As to quaternary structure, forms homodimer and may homooligomerize and heterooligomerize to form the phragmoplastin complex. Interacts with AGD3/VAN3. May interact with CALS1. Binds to AHK2. Binds to SH3P2. Forms a complex made of SH3P2 and DRP1A and triggers its accumulation at the cell plate. Interacts with DRP2B at the plasma membrane and in forming clathrin-coated vesicles (CCV). Binds to PHIP1. Ubiquitous. Expressed in leaves (at protein level).

It localises to the cytoplasm. The protein localises to the cytoskeleton. The protein resides in the phragmoplast. Its subcellular location is the cell cortex. It is found in the cytoplasmic vesicle. It localises to the clathrin-coated vesicle. The protein localises to the cell membrane. It catalyses the reaction GTP + H2O = GDP + phosphate + H(+). Microtubule-associated force-producing protein that is targeted to at the leading edges of the forming cell plate during cytokinesis. Also plays a major role in plasma membrane maintenance and cell wall integrity with implications in vesicular trafficking, polar cell expansion, vascular formation, and other aspects of plant growth and development, including stigmatic papillae expansion. Collaboratively with DRP2B, participates in clathrin-coated vesicle formation during endocytosis. Necessary for BOR1 polar localization in low-boron (B) conditions as well as for BOR1 endocytosis and subsequent degradation under high-concentration of boron. Has a GTPase activity. Required for the sterols-dependent dynamic high lipid order observed at the cell plate of dividing cells. Together with SH3P2, converts the fused vesicles to tubular structures at the cell plate and phragmoplasts during cytokinesis. With DRP2B and PIP5K3, required for the precise coordination of polar ARAC3/ROP6 and ARAC4/ROP2 placement and subsequent root hair positioning during planar polarity formation in root hair-forming cells, probably by mediating the correct basal-to-planar polarity switching of D6PK into the polar, lipid-enriched domain. Involved in endocytosis required for cellulose deposition during cell wall formation and elongation. Interacts with plasma membrane-mimetic liposomes and induces their clustering. The sequence is that of Phragmoplastin DRP1A from Arabidopsis thaliana (Mouse-ear cress).